The primary structure comprises 812 residues: Plasminogen (812 aa).

The first 19 residues, 1–19, serve as a signal peptide directing secretion; the sequence is MDHKEVILLFLLLLKPGQG. One can recognise a PAN domain in the interval 20–98; sequence DSLDGYISTQ…RDVILFEKRV (79 aa). Cystine bridges form between C49/C73, C53/C61, C103/C181, C124/C164, C152/C176, C185/C262, C188/C316, C206/C245, C234/C257, C275/C352, C296/C335, C324/C347, C377/C454, C398/C437, C426/C449, C481/C560, C502/C543, C531/C555, C568/C687, C578/C586, and C609/C625. 5 Kringle domains span residues 103–181, 184–262, 275–352, 377–454, and 481–560; these read CKTG…IPEC, ECMY…IPRC, CLKG…IPSC, CYQS…LKRC, and CMYG…IPLC. A Peptidase S1 domain is found at 582–810; sequence VVGGCVANPH…FVDWIEREMR (229 aa). Phosphoserine is present on S598. Residues H624 and D667 each act as charge relay system in the active site. Residue S690 is modified to Phosphoserine. Cystine bridges form between C701–C768, C731–C747, and C758–C786. Catalysis depends on S762, which acts as the Charge relay system.

This sequence belongs to the peptidase S1 family. Plasminogen subfamily. As to quaternary structure, interacts (both mature PLG and the angiostatin peptide) with AMOT and CSPG4. Interacts (via the Kringle domains) with HRG; the interaction tethers PLG to the cell surface and enhances its activation. Interacts (via Kringle 4 domain) with ADA; the interaction stimulates PLG activation when in complex with DPP4. Angiostatin: Interacts with ATP5F1A; the interaction inhibits most of the angiogenic effects of angiostatin. Post-translationally, in the presence of the inhibitor, the activation involves only cleavage after Arg-581, yielding two chains held together by two disulfide bonds. In the absence of the inhibitor, the activation involves additionally the removal of the activation peptide.

It localises to the secreted. The enzyme catalyses Preferential cleavage: Lys-|-Xaa &gt; Arg-|-Xaa, higher selectivity than trypsin. Converts fibrin into soluble products.. With respect to regulation, converted into plasmin by plasminogen activators, both plasminogen and its activator being bound to fibrin. Cannot be activated with streptokinase. In terms of biological role, plasmin dissolves the fibrin of blood clots and acts as a proteolytic factor in a variety of other processes including embryonic development, tissue remodeling, tumor invasion, and inflammation. In ovulation, weakens the walls of the Graafian follicle. It activates the urokinase-type plasminogen activator, collagenases and several complement zymogens, such as C1, C4 and C5. Cleavage of fibronectin and laminin leads to cell detachment and apoptosis. Also cleaves fibrin, thrombospondin and von Willebrand factor. Its role in tissue remodeling and tumor invasion may be modulated by CSPG4. Binds to cells. Angiostatin is an angiogenesis inhibitor that blocks neovascularization and growth of experimental primary and metastatic tumors in vivo. This is Plasminogen (Plg) from Mus musculus (Mouse).